Reading from the N-terminus, the 126-residue chain is Glycine cleavage system H protein (126 aa).

The Lipoyl-binding domain occupies 21–103; it reads TVTIGISEHA…YEGGWIVKVK (83 aa). K62 is modified (N6-lipoyllysine).

It belongs to the GcvH family. As to quaternary structure, the glycine cleavage system is composed of four proteins: P, T, L and H. The cofactor is (R)-lipoate.

The glycine cleavage system catalyzes the degradation of glycine. The H protein shuttles the methylamine group of glycine from the P protein to the T protein. This is Glycine cleavage system H protein from Vibrio vulnificus (strain CMCP6).